Reading from the N-terminus, the 424-residue chain is MSTTTRTLQAIKFDRNNIKLEILDQLLLPYSTTYIPITSIEDAFKAIKLMQVRGAPAIAIVGAFSVVVEVSNYLKQSDSNRKTIENLNDSLDYLITSRPTAVNLANALNDIKQLLQEFNDTDIINEKIYQQIYDYAIALYDEDLANNKKIGENGLKYIINTLTEQNFKGPFSIMTICNTGSLATSGHGTALGIIRSTYQALQKNNSKEEFWLDHIYPCETRPYNQGAKLTTYELDYEQIPFTLICDNMVSSLINTLSDDDNKKPIKTNQISPVKFIIVGADRIVENGDTANKIGTFQLSTIANFFNNNKFIQQQSKSNTTKTTINKEIKFIVAAPKTTIDLNTKTGDDIVIEERPANELTTLVGPLLNEAGDVGEKLTVGIATPGISVWNPAFDVTPHELIDSIVTEDPHVFTKDENGEFNLIK.

The active-site Proton donor is Asp281.

The protein belongs to the eIF-2B alpha/beta/delta subunits family. MtnA subfamily.

It localises to the cytoplasm. The protein resides in the nucleus. The enzyme catalyses 5-(methylsulfanyl)-alpha-D-ribose 1-phosphate = 5-(methylsulfanyl)-D-ribulose 1-phosphate. It functions in the pathway amino-acid biosynthesis; L-methionine biosynthesis via salvage pathway; L-methionine from S-methyl-5-thio-alpha-D-ribose 1-phosphate: step 1/6. Catalyzes the interconversion of methylthioribose-1-phosphate (MTR-1-P) into methylthioribulose-1-phosphate (MTRu-1-P). The sequence is that of Methylthioribose-1-phosphate isomerase from Candida dubliniensis (strain CD36 / ATCC MYA-646 / CBS 7987 / NCPF 3949 / NRRL Y-17841) (Yeast).